The chain runs to 654 residues: Collagen alpha-1(XXV) chain (654 aa).

The segment at 1–26 is disordered; sequence MLLKKHAGKGGGREPRSEDPTPAEQH. The Cytoplasmic segment spans residues 1–33; that stretch reads MLLKKHAGKGGGREPRSEDPTPAEQHCARTMPP. The helical; Signal-anchor for type II membrane protein transmembrane segment at 34–54 threads the bilayer; sequence CAVLAALLSVVAVVSCLYLGV. The Extracellular portion of the chain corresponds to 55–654; sequence KTNDLQARIA…GLPMPGCWQK (600 aa). Glutamate 113 carries the post-translational modification Pyrrolidone carboxylic acid (Glu). The segment at 116–168 is disordered; the sequence is SECNCPAGPPGKRGKRGRRGESGPPGQPGPQGPPGPKGDKGEQGDQGPRMVFP. The region spanning 121–164 is the Collagen-like 1 domain; it reads PAGPPGKRGKRGRRGESGPPGQPGPQGPPGPKGDKGEQGDQGPR. Pro residues predominate over residues 140–151; sequence PGQPGPQGPPGP. An interaction with amyloid-beta peptide region spans residues 181 to 188; the sequence is LIKRRLIK. Disordered stretches follow at residues 189–426 and 445–654; these read GDQG…QGAT and LTVT…CWQK. 5 Collagen-like domains span residues 192-247, 249-308, 311-370, 372-425, and 447-505; these read GQAG…QKGS, GAPG…PGSS, GIKG…AGPP, RGER…DQGA, and VTGP…PGLP. Residues 196–208 are compositionally biased toward pro residues; sequence PPGPPGPPGPRGP. A compositionally biased stretch (low complexity) spans 230-245; the sequence is PGEQGLMGPLGPPGQK. Over residues 280–290 the composition is skewed to basic and acidic residues; it reads EPGEQGEKGDA. Positions 336 to 358 are enriched in low complexity; that stretch reads LPGIKGEPGFIGPQGEPGLPGLP. Composition is skewed to basic and acidic residues over residues 361 to 377 and 398 to 407; these read KGER…ERGE and SKGDRGEKGD. Residues 457–466 are compositionally biased toward low complexity; it reads QGLQGPKGEQ. The segment covering 494-503 has biased composition (gly residues); sequence GEKGGIGLPG. Residues 517–527 show a composition bias toward low complexity; the sequence is SGMPGPQGPSI. A compositionally biased stretch (pro residues) spans 528 to 543; sequence IGPPGPPGPHGPPGPM. The region spanning 571–630 is the Collagen-like 7 domain; the sequence is GEKGAMGEPGPRGPYGLPGKDGEPGLDGFPGPRGEKGDLGEKGEKGFRGVKGEKGEPGQP. Positions 603–626 are enriched in basic and acidic residues; the sequence is RGEKGDLGEKGEKGFRGVKGEKGE.

Forms homodimers and homotrimers. Binds to the fibrillized forms of amyloid-beta protein 40 (beta-APP40) and amyloid-beta protein 42 (beta-APP42). Found associated with beta-APP42 more frequently than with beta-APP40. Undergoes proteolytic cleavage by furin protease to yield the soluble collagen-like Alzheimer amyloid plaque component. In terms of processing, glycosylated. Post-translationally, hydroxylated on 11% of proline residues and 49% of lysine residues. As to expression, expressed predominantly in brain. Deposited preferentially in primitive or neuritic amyloid plaques which are typical of Alzheimer disease.

It is found in the membrane. Its function is as follows. Inhibits fibrillization of amyloid-beta peptide during the elongation phase. Has also been shown to assemble amyloid fibrils into protease-resistant aggregates. Binds heparin. This is Collagen alpha-1(XXV) chain from Homo sapiens (Human).